The primary structure comprises 442 residues: Divalent metal cation transporter MntH (442 aa).

The next 11 membrane-spanning stretches (helical) occupy residues 29–49 (MLAY…PGNW), 62–82 (TLLT…SLCV), 106–126 (FCLW…ELLG), 135–155 (FVIP…VLLF), 166–186 (ALVI…ILFS), 209–229 (MLYI…LYLH), 258–278 (FALS…AATF), 295–315 (LLSP…ALLA), 347–367 (LITR…FGEN), 372–392 (LIVL…IPLV), and 413–433 (LAWL…LQSL).

It belongs to the NRAMP family.

Its subcellular location is the cell inner membrane. H(+)-stimulated, divalent metal cation uptake system. This is Divalent metal cation transporter MntH from Nostoc sp. (strain PCC 7120 / SAG 25.82 / UTEX 2576).